Consider the following 397-residue polypeptide: Acetylornithine aminotransferase (397 aa).

F129 serves as a coordination point for pyridoxal 5'-phosphate. R132 lines the N(2)-acetyl-L-ornithine pocket. 214–217 (DEVQ) contributes to the pyridoxal 5'-phosphate binding site. Position 243 is an N6-(pyridoxal phosphate)lysine (K243). S271 contacts N(2)-acetyl-L-ornithine. T272 is a binding site for pyridoxal 5'-phosphate.

Belongs to the class-III pyridoxal-phosphate-dependent aminotransferase family. ArgD subfamily. As to quaternary structure, homodimer. Pyridoxal 5'-phosphate serves as cofactor.

It is found in the cytoplasm. It carries out the reaction N(2)-acetyl-L-ornithine + 2-oxoglutarate = N-acetyl-L-glutamate 5-semialdehyde + L-glutamate. Its pathway is amino-acid biosynthesis; L-arginine biosynthesis; N(2)-acetyl-L-ornithine from L-glutamate: step 4/4. This is Acetylornithine aminotransferase from Neisseria meningitidis serogroup A / serotype 4A (strain DSM 15465 / Z2491).